The sequence spans 471 residues: Major facilitator-type transporter psiT1 (471 aa).

The segment at 1–36 (MNPTTATDAHERTSLLSGRPQSAANSTAPYERQVQP) is disordered. Residues 14–36 (SLLSGRPQSAANSTAPYERQVQP) are compositionally biased toward polar residues. N-linked (GlcNAc...) asparagine glycosylation is present at N25. 8 helical membrane-spanning segments follow: residues 44 to 64 (TPVT…TMVI), 108 to 128 (AIMV…GTGI), 140 to 160 (PVLM…LTVQ), 168 to 188 (LVTF…TTVF), 212 to 232 (GWLV…TTFL), 237 to 257 (AVYI…AFVL), 322 to 342 (LHSF…LIFF), and 356 to 376 (VMTT…PLFI). A glycan (N-linked (GlcNAc...) asparagine) is linked at N384. Residues 424–444 (VHITVISWTIESLAYIVLGTV) form a helical membrane-spanning segment.

The protein belongs to the major facilitator superfamily. TCR/Tet family.

It is found in the membrane. Functionally, major facilitator-type transporter; part of the gene cluster that mediates the biosynthesis of psilocybin, a psychotropic tryptamine-derived natural product. In Psilocybe cyanescens, this protein is Major facilitator-type transporter psiT1.